The following is a 429-amino-acid chain: Mannose-6-phosphate isomerase (429 aa).

Residues glutamine 109, histidine 111, glutamate 136, and histidine 281 each contribute to the Zn(2+) site. The active site involves arginine 300.

This sequence belongs to the mannose-6-phosphate isomerase type 1 family. The cofactor is Zn(2+).

The protein resides in the cytoplasm. The catalysed reaction is D-mannose 6-phosphate = D-fructose 6-phosphate. It participates in nucleotide-sugar biosynthesis; GDP-alpha-D-mannose biosynthesis; alpha-D-mannose 1-phosphate from D-fructose 6-phosphate: step 1/2. In terms of biological role, involved in the synthesis of the GDP-mannose and dolichol-phosphate-mannose required for a number of critical mannosyl transfer reactions. The chain is Mannose-6-phosphate isomerase (PMI1) from Eremothecium gossypii (strain ATCC 10895 / CBS 109.51 / FGSC 9923 / NRRL Y-1056) (Yeast).